Here is a 463-residue protein sequence, read N- to C-terminus: MGSMYYNESRMVRKDEVTCNVIIGDDKKTVVYALRIGNGPIMQKTFEEYERFFTTEKDMIPATIFTAPKKKFLQADSKFYEKRRVWILVISQHLVDNNLRSEDVRRFFHLESPDDDENNVDLGPSERKTATANDFDYLTTIGKGSFGRVYQVRHKETKKIYAMKILSKEHIRKKNEVKHVMAERNVLINNFKHPFLVSLHFSFQNKEKLYFVLDHLNGGELFSHLQREKHFSESRSRFYAAEIACALGYLHEKNIIYRDLKPENLLLDDKGYLVLTDFGLCKEDMQGSKTTSTFCGTPEYLAPEIILKKPYDKTVDWWCLGSVLYEMIFGLPPFYSKDHNEMYDKIINQPLRLKHNISVPCSELITGLLQKDRSKRLGHRNDFRDIRDHPFFLPVDWDKLLNRELKAPFIPKVKNAMDTSNISKEFVEIQIDPSSLAPQQLAVTHRDHDFENFTFVDTNRVLV.

The Protein kinase domain occupies 135–392 (FDYLTTIGKG…FRDIRDHPFF (258 aa)). ATP is bound by residues 141–149 (IGKGSFGRV) and lysine 164. The active-site Proton acceptor is the aspartate 259. Positions 393–463 (LPVDWDKLLN…TFVDTNRVLV (71 aa)) constitute an AGC-kinase C-terminal domain.

This sequence belongs to the protein kinase superfamily. AGC Ser/Thr protein kinase family. In terms of assembly, interacts with pdk-1, akt-1, akt-2 and daf-16. Part of a complex containing sgk-1, akt-1 and akt-2. Interacts with let-92 phosphatase regulatory subunit pptr-1. Requires Mg(2+) as cofactor. Expressed in late embryos just before hatching. At postembryonic stages, expressed in sensory and motor neurons and in the intestine. Highly expressed in the intestine and head and tail neurons.

It localises to the cytoplasm. It is found in the nucleus. Its subcellular location is the apical cell membrane. The catalysed reaction is L-seryl-[protein] + ATP = O-phospho-L-seryl-[protein] + ADP + H(+). It catalyses the reaction L-threonyl-[protein] + ATP = O-phospho-L-threonyl-[protein] + ADP + H(+). With respect to regulation, phosphorylated and activated by pdk-1. Functionally, acts downstream of PI3 kinase age-1 and kinase pdk-1 in the daf-2/insulin receptor-like transduction pathway. Essential role in regulating development, stress response, and longevity. Phosphorylates Forkhead-related daf-16 and the longevity-promoting skn-1 transcription factors, which inhibits their entry into the nucleus and antagonizes their function. Promotes the cytoplasmic localization of the transcription factor pqm-1. Plays a role in the intracellular trafficking of proteins such as mig-14 to the cell membrane, and this may be through positively regulating ceramide synthesis. Acts downstream of rict-1 to regulate fat storage, size, development and vitellogenesis. Downstream of age-1 and together with akt-1/2, promotes cell survival during embryonic development. Plays a role in maintaining the gonadal basement membrane through antagonizing akt-1 activity. Does not appear to play a role in immune function. The sequence is that of Serine/threonine-protein kinase sgk-1 from Caenorhabditis elegans.